Here is a 627-residue protein sequence, read N- to C-terminus: MIQIGKIFADRYRIIKEIGRGGMANVYQGEDTFLGDRLVAIKVLRSNFENDDIAIARFQREAFAMAELSHPNIVGISDVGEFESQQYIVMEFVDGMTLKQYINQNAPLANDEAIEIITEILSAMDMAHSHGIIHRDLKPQNVLVSSSGTVKVTDFGIAKALSETSLTQTNTMFGSVHYLSPEQARGSNATVQSDIYAIGIILFELLTGQIPFDGDSAVAIALKHFQESIPSIINLNPEVPQALENVVIKATAKDIKNRYTDVEEMMTDVATSTSLDRRGEEKLVFNKDHDETKIMPANLINPYDTKPLIDKKEDNDSQTDEKAASSEVGNKNKKSKKGLIIGLIILLLVVGGATLAWVVSTPTNVKIPNVTNSTLSQAKSKIKDAKLKVGTVHKQQSSTIAEGKVIKTDPTSGTTVRSNSSVDIYVSTGNEDIIKMKDFVGEKIDEAMATLLKDYGIDESQVTQTSVPSDSYPAGTIIKQSPKKGSSFDTKGSEKITFEVSSGKQVEVPDYKPNGQYMTYSQYQAALKAAGFTNITLDPQATTNQQADGYVYSVYPNVGTSVDPTQEIVVTYSVYTAPSSSSTTSESTTTSETSSSTTSSTSSSTTSQPSTDNNNSSKESSTTSSSS.

One can recognise a Protein kinase domain in the interval tyrosine 12 to leucine 275. ATP-binding positions include isoleucine 18–valine 26 and lysine 42. Aspartate 136 serves as the catalytic Proton acceptor. The tract at residues aspartate 304–lysine 331 is disordered. Over residues proline 307–alanine 324 the composition is skewed to basic and acidic residues. PASTA domains follow at residues threonine 361–threonine 428, asparagine 430–serine 502, and glycine 503–valine 574. Residues glutamine 464–threonine 490 form a disordered region. The tract at residues alanine 577–serine 627 is disordered. Over residues serine 579–serine 627 the composition is skewed to low complexity.

The protein belongs to the protein kinase superfamily. Ser/Thr protein kinase family.

The enzyme catalyses L-seryl-[protein] + ATP = O-phospho-L-seryl-[protein] + ADP + H(+). It catalyses the reaction L-threonyl-[protein] + ATP = O-phospho-L-threonyl-[protein] + ADP + H(+). This chain is Probable serine/threonine-protein kinase PknB (pknB), found in Lactococcus lactis subsp. lactis (strain IL1403) (Streptococcus lactis).